A 242-amino-acid chain; its full sequence is Probable septum site-determining protein MinC (242 aa).

This sequence belongs to the MinC family. In terms of assembly, interacts with MinD and FtsZ.

Functionally, cell division inhibitor that blocks the formation of polar Z ring septums. Rapidly oscillates between the poles of the cell to destabilize FtsZ filaments that have formed before they mature into polar Z rings. Prevents FtsZ polymerization. The polypeptide is Probable septum site-determining protein MinC (Agrobacterium fabrum (strain C58 / ATCC 33970) (Agrobacterium tumefaciens (strain C58))).